A 402-amino-acid polypeptide reads, in one-letter code: Adenylyltransferase and sulfurtransferase MOCS3 (402 aa).

ATP contacts are provided by residues Gly47, Asp68, 75–79, Lys92, and 136–137; these read DNLHR and DN. Residues Cys178 and Cys181 each contribute to the Zn(2+) site. Cys195 serves as the catalytic Glycyl thioester intermediate; for adenylyltransferase activity. Residues Cys253 and Cys256 each coordinate Zn(2+). The region spanning 303–400 is the Rhodanese domain; sequence AARKQFLLDT…WALKINDEFP (98 aa). The Cysteine persulfide intermediate; for sulfurtransferase activity role is filled by Cys359.

The protein in the N-terminal section; belongs to the HesA/MoeB/ThiF family. UBA4 subfamily. It depends on Zn(2+) as a cofactor.

The protein resides in the cytoplasm. It is found in the cytosol. The catalysed reaction is [molybdopterin-synthase sulfur-carrier protein]-C-terminal Gly-Gly + ATP + H(+) = [molybdopterin-synthase sulfur-carrier protein]-C-terminal Gly-Gly-AMP + diphosphate. The enzyme catalyses [molybdopterin-synthase sulfur-carrier protein]-C-terminal Gly-Gly-AMP + S-sulfanyl-L-cysteinyl-[cysteine desulfurase] + AH2 = [molybdopterin-synthase sulfur-carrier protein]-C-terminal-Gly-aminoethanethioate + L-cysteinyl-[cysteine desulfurase] + A + AMP + 2 H(+). It participates in tRNA modification; 5-methoxycarbonylmethyl-2-thiouridine-tRNA biosynthesis. It functions in the pathway cofactor biosynthesis; molybdopterin biosynthesis. Its function is as follows. Plays a central role in 2-thiolation of mcm(5)S(2)U at tRNA wobble positions of cytosolic tRNA(Lys), tRNA(Glu) and tRNA(Gln). Also essential during biosynthesis of the molybdenum cofactor. Acts by mediating the C-terminal thiocarboxylation of sulfur carriers URM1 and MOCS2A. Its N-terminus first activates URM1 and MOCS2A as acyl-adenylates (-COAMP), then the persulfide sulfur on the catalytic cysteine is transferred to URM1 and MOCS2A to form thiocarboxylation (-COSH) of their C-terminus. The reaction probably involves hydrogen sulfide that is generated from the persulfide intermediate and that acts as a nucleophile towards URM1 and MOCS2A. Subsequently, a transient disulfide bond is formed. Does not use thiosulfate as sulfur donor; NFS1 probably acting as a sulfur donor for thiocarboxylation reactions. The chain is Adenylyltransferase and sulfurtransferase MOCS3 from Caenorhabditis briggsae.